Reading from the N-terminus, the 197-residue chain is Small ribosomal subunit protein uS4B (197 aa).

The region spanning 88-150 (SRLDNMVYRM…SRKTEMFVNN (63 aa)) is the S4 RNA-binding domain.

This sequence belongs to the universal ribosomal protein uS4 family. As to quaternary structure, part of the 30S ribosomal subunit. Contacts protein S5. The interaction surface between S4 and S5 is involved in control of translational fidelity.

In terms of biological role, one of the primary rRNA binding proteins, it binds directly to 16S rRNA where it nucleates assembly of the body of the 30S subunit. Its function is as follows. With S5 and S12 plays an important role in translational accuracy. In Clostridium perfringens (strain SM101 / Type A), this protein is Small ribosomal subunit protein uS4B.